The sequence spans 465 residues: Myosin-6 (465 aa).

The 35-residue stretch at 1–35 (ILERGDALLVVQWNIRAFTGVKKWPWMELYFEIEP) folds into the Myosin motor domain. Residues 36-465 (LLKSAEAEKE…YRRKLEEAQR (430 aa)) are a coiled coil. Phosphoserine is present on residues S285 and S334. At Y456 the chain carries Phosphotyrosine.

Muscle myosin is a hexameric protein that consists of 2 heavy chain subunits (MHC), 2 alkali light chain subunits (MLC) and 2 regulatory light chain subunits (MLC-2).

Its subcellular location is the cytoplasm. It is found in the myofibril. Muscle contraction. This Oryctolagus cuniculus (Rabbit) protein is Myosin-6 (MYH6).